The primary structure comprises 294 residues: Metallophosphoesterase MPPED2 (294 aa).

The Mn(2+) site is built by D65, H67, D86, N117, and H213. 117–118 contacts GMP; that stretch reads NH. GMP contacts are provided by residues 225-226 and 254-255; these read KE and HE. H254 lines the Mn(2+) pocket.

It belongs to the UPF0046 family. Homodimer. Mn(2+) is required as a cofactor. Co(2+) serves as cofactor. Expressed in fetal brain (at protein level). detected in fetal and adult brain.

Inhibited by nmolar levels of AMP and GMP. Its function is as follows. Displays low metallophosphoesterase activity (in vitro). May play a role in the development of the nervous system. This Rattus norvegicus (Rat) protein is Metallophosphoesterase MPPED2 (Mpped2).